Here is a 248-residue protein sequence, read N- to C-terminus: UPF0736 protein ABC2536 (248 aa).

It belongs to the UPF0736 family.

The polypeptide is UPF0736 protein ABC2536 (Shouchella clausii (strain KSM-K16) (Alkalihalobacillus clausii)).